Here is a 224-residue protein sequence, read N- to C-terminus: CRP-like cAMP-activated global transcriptional regulator (224 aa).

3',5'-cyclic AMP-binding positions include 64-70, 79-82, 89-90, 134-135, 142-143, and 178-188; these read GRENLLT, GELS, RT, TN, IF, and EEIAQLVGASR. An HTH crp-type domain is found at 144–217; that stretch reads TDVPGRVAKQ…GKSVLISDSE (74 aa). The segment at residues 177 to 196 is a DNA-binding region (H-T-H motif); the sequence is QEEIAQLVGASRETVNKALA.

Homodimer.

Its function is as follows. Global transcriptional regulator that complexes with cAMP and binds to specific DNA promoter sites, causing DNA-bending, to regulate transcription. cAMP improves binding to specific DNA sequences, probably by altering protein conformation. Activates expression of whiB1. The polypeptide is CRP-like cAMP-activated global transcriptional regulator (Mycobacterium tuberculosis (strain CDC 1551 / Oshkosh)).